We begin with the raw amino-acid sequence, 776 residues long: Protein SEY1 (776 aa).

Over methionine 1–histidine 681 the chain is Cytoplasmic. The region spanning glycine 34–tyrosine 263 is the GB1/RHD3-type G domain. Glycine 44 to serine 51 is a GTP binding site. A helical membrane pass occupies residues isoleucine 682–isoleucine 702. The Lumenal portion of the chain corresponds to arginine 703 to proline 705. The chain crosses the membrane as a helical span at residues leucine 706–leucine 726. Residues tryptophan 727–lysine 776 are Cytoplasmic-facing.

It belongs to the TRAFAC class dynamin-like GTPase superfamily. GB1/RHD3 GTPase family. RHD3 subfamily. Interacts with RTN1 and YOP1; GTP binding is not required for these interactions.

The protein resides in the endoplasmic reticulum membrane. Cooperates with the reticulon proteins RTN1 and RTN2 and the tubule-shaping DP1 family protein YOP1 to generate and maintain the structure of the tubular endoplasmic reticulum network. Has GTPase activity, which is required for its function in ER organization. This is Protein SEY1 from Saccharomyces cerevisiae (strain RM11-1a) (Baker's yeast).